A 403-amino-acid chain; its full sequence is CCA-adding enzyme (403 aa).

Residues Gly32 and Arg35 each contribute to the ATP site. Residues Gly32 and Arg35 each contribute to the CTP site. Positions 45 and 47 each coordinate Mg(2+). 5 residues coordinate ATP: Arg116, Asp159, Arg162, Arg165, and Arg168. CTP-binding residues include Arg116, Asp159, Arg162, Arg165, and Arg168.

This sequence belongs to the tRNA nucleotidyltransferase/poly(A) polymerase family. Bacterial CCA-adding enzyme type 3 subfamily. In terms of assembly, homodimer. Mg(2+) is required as a cofactor.

The enzyme catalyses a tRNA precursor + 2 CTP + ATP = a tRNA with a 3' CCA end + 3 diphosphate. It catalyses the reaction a tRNA with a 3' CCA end + 2 CTP + ATP = a tRNA with a 3' CCACCA end + 3 diphosphate. Functionally, catalyzes the addition and repair of the essential 3'-terminal CCA sequence in tRNAs without using a nucleic acid template. Adds these three nucleotides in the order of C, C, and A to the tRNA nucleotide-73, using CTP and ATP as substrates and producing inorganic pyrophosphate. tRNA 3'-terminal CCA addition is required both for tRNA processing and repair. Also involved in tRNA surveillance by mediating tandem CCA addition to generate a CCACCA at the 3' terminus of unstable tRNAs. While stable tRNAs receive only 3'-terminal CCA, unstable tRNAs are marked with CCACCA and rapidly degraded. The chain is CCA-adding enzyme from Leuconostoc citreum (strain KM20).